The sequence spans 997 residues: Sarcoplasmic/endoplasmic reticulum calcium ATPase 2 (997 aa).

The Cytoplasmic portion of the chain corresponds to 1–48 (MENAHTKTVEEVLGYFGVNESTGLSLEQVKKLKERWGSNELPAEEGKT). Residue serine 38 is modified to Phosphoserine. The chain crosses the membrane as a helical span at residues 49 to 69 (LLELVIEQFEDLLVRILLLAA). The Lumenal portion of the chain corresponds to 70–89 (CISFVLAWFEEGEETITAFV). A helical transmembrane segment spans residues 90–110 (EPFVILLILVANAIVGVWQER). At 111-253 (NAENAIEALK…QERTPLQQKL (143 aa)) the chain is on the cytoplasmic side. Residues 254-273 (DEFGEQLSKVISLICIAVWI) form a helical membrane-spanning segment. Topologically, residues 274–295 (INIGHFNDPVHGGSWIRGAIYY) are lumenal. Residues tyrosine 294 and tyrosine 295 each carry the 3'-nitrotyrosine modification. A helical transmembrane segment spans residues 296–313 (FKIAVALAVAAIPEGLPA). The Ca(2+) site is built by valine 304, alanine 305, isoleucine 307, and glutamate 309. Residues 314–756 (VITTCLALGT…EEGRAIYNNM (443 aa)) are Cytoplasmic-facing. Aspartate 351 acts as the 4-aspartylphosphate intermediate in catalysis. Residues aspartate 351 and threonine 353 each contribute to the Mg(2+) site. Residue threonine 353 participates in ATP binding. Position 441 is a phosphothreonine (threonine 441). Residues glutamate 442, arginine 489, and lysine 514 each coordinate ATP. Position 531 is a phosphoserine (serine 531). Position 559 (arginine 559) interacts with ATP. The tract at residues 575–594 (MNLEDSANFIKYETNLTFVG) is interaction with HAX1. Position 580 is a phosphoserine (serine 580). ATP-binding residues include threonine 624, glycine 625, and aspartate 626. Phosphoserine is present on residues serine 661 and serine 663. The ATP site is built by arginine 677 and lysine 683. Aspartate 702 contacts Mg(2+). Residue asparagine 705 participates in ATP binding. The helical transmembrane segment at 757–776 (KQFIRYLISSNVGEVVCIFL) threads the bilayer. 2 residues coordinate Ca(2+): asparagine 767 and glutamate 770. The Lumenal portion of the chain corresponds to 777–786 (TAALGFPEAL). A helical transmembrane segment spans residues 787 to 807 (IPVQLLWVNLVTDGLPATALG). The interaction with PLN stretch occupies residues 787-807 (IPVQLLWVNLVTDGLPATALG). The tract at residues 788-997 (PVQLLWVNLV…RNYLEPAILE (210 aa)) is interaction with TMEM64 and PDIA3. Residues asparagine 795, threonine 798, and aspartate 799 each coordinate Ca(2+). The Cytoplasmic segment spans residues 808 to 827 (FNPPDLDIMNKPPRNPKEPL). A helical transmembrane segment spans residues 828–850 (ISGWLFFRYLAIGCYVGAATVGA). Topologically, residues 851–896 (AAWWFIAADGGPRVSFYQLSHFLQCKDDNPDFEGVDCAIFESPYPM) are lumenal. The cysteines at positions 875 and 887 are disulfide-linked. Residues 897 to 916 (TMALSVLVTIEMCNALNSLS) traverse the membrane as a helical segment. Glutamate 907 is a Ca(2+) binding site. The Cytoplasmic segment spans residues 917-929 (ENQSLLRMPPWEN). A helical membrane pass occupies residues 930 to 948 (IWLVGSICLSMSLHFLILY). Residues 931–942 (WLVGSICLSMSL) are interaction with PLN. At 949–963 (VEPLPLIFQITPLNL) the chain is on the lumenal side. A helical transmembrane segment spans residues 964–984 (TQWLMVLKISLPVILMDETLK). Residues 985-997 (FVARNYLEPAILE) are Cytoplasmic-facing.

It belongs to the cation transport ATPase (P-type) (TC 3.A.3) family. Type IIA subfamily. In terms of assembly, interacts with sarcolipin (SLN); the interaction inhibits ATP2A2 Ca(2+) affinity. Interacts with phospholamban (PLN); the interaction inhibits ATP2A2 Ca(2+) affinity. Interacts with myoregulin (MRLN). Interacts with ARLN and ERLN; the interactions inhibit ATP2A2 Ca(2+) affinity. Interacts with STRIT1/DWORF; the interaction results in activation of ATP2A2. Interacts with the monomeric forms of SLN, PLN, ARLN, ERLN and STRI1/DWORF. Interacts with HAX1. Interacts with S100A8 and S100A9. Interacts with SLC35G1 and STIM1. Interacts with TMEM203. Interacts with TMEM64 and PDIA3. Interacts with TMX1. Interacts with TMX2. Interacts with VMP1; VMP1 competes with PLN and SLN to prevent them from forming an inhibitory complex with ATP2A2. Interacts with ULK1. Interacts with S100A1 in a Ca(2+)-dependent manner. Interacts with TUNAR. Interacts with FLVCR2; this interaction occurs in the absence of heme and promotes ATP2A2 proteasomal degradation; this complex is dissociated upon heme binding. Interacts with FNIP1. As to quaternary structure, interacts with TRAM2 (via C-terminus). Mg(2+) serves as cofactor. Post-translationally, nitrated under oxidative stress. Nitration on the two tyrosine residues inhibits catalytic activity. In terms of processing, serotonylated on Gln residues by TGM2 in response to hypoxia, leading to its inactivation. As to expression, isoform 1 is expressed in the heart.

The protein resides in the endoplasmic reticulum membrane. Its subcellular location is the sarcoplasmic reticulum membrane. The enzyme catalyses Ca(2+)(in) + ATP + H2O = Ca(2+)(out) + ADP + phosphate + H(+). Has different conformational states with differential Ca2+ affinity. The E1 conformational state (active form) shows high Ca(2+) affinity, while the E2 state exhibits low Ca(2+) affinity. Binding of ATP allosterically increases its affinity for subsequent binding of Ca2+. Reversibly inhibited by phospholamban (PLN) at low calcium concentrations. PLN inhibits ATP2A2 Ca(2+) affinity by disrupting its allosteric activation by ATP. Inhibited by sarcolipin (SLN) and myoregulin (MRLN). The inhibition is blocked by VMP1. Enhanced by STRIT1/DWORF; STRIT1 increases activity by displacing sarcolipin (SLN), phospholamban (PLN) and myoregulin (MRLN). Stabilizes SERCA2 in its E2 state. Its function is as follows. This magnesium-dependent enzyme catalyzes the hydrolysis of ATP coupled with the translocation of calcium from the cytosol to the sarcoplasmic reticulum lumen. Involved in autophagy in response to starvation. Upon interaction with VMP1 and activation, controls ER-isolation membrane contacts for autophagosome formation. Also modulates ER contacts with lipid droplets, mitochondria and endosomes. In coordination with FLVCR2 mediates heme-stimulated switching from mitochondrial ATP synthesis to thermogenesis. Functionally, involved in the regulation of the contraction/relaxation cycle. Acts as a regulator of TNFSF11-mediated Ca(2+) signaling pathways via its interaction with TMEM64 which is critical for the TNFSF11-induced CREB1 activation and mitochondrial ROS generation necessary for proper osteoclast generation. Association between TMEM64 and SERCA2 in the ER leads to cytosolic Ca(2+) spiking for activation of NFATC1 and production of mitochondrial ROS, thereby triggering Ca(2+) signaling cascades that promote osteoclast differentiation and activation. The protein is Sarcoplasmic/endoplasmic reticulum calcium ATPase 2 (ATP2A2) of Felis catus (Cat).